We begin with the raw amino-acid sequence, 653 residues long: Exocyst complex component 7 (653 aa).

Residues 1–384 (MIPPQEASAR…TKNKLPGLIT (384 aa)) form an SEC8 and ARHQ binding region. 2 coiled-coil regions span residues 5-42 (QEASARRREIEDKLKQEEETLSFIRDSLEKSDQLTKNM) and 63-85 (VHKQTENLQRLQENVEKTLSCLD). S133 carries the post-translational modification Phosphoserine. The disordered stretch occupies residues 238–272 (FRKSSSSSGVPYSPAIPNKRKDTPTKKPIKRPGRD).

The protein belongs to the EXO70 family. In terms of assembly, the exocyst complex is composed of EXOC1, EXOC2, EXOC3, EXOC4, EXOC5, EXOC6, EXOC7 and EXOC8. Interacts with ARHQ in a GTP-dependent manner. Interacts with RAB11FIP3.

It localises to the cytoplasm. The protein resides in the cytosol. Its subcellular location is the cell membrane. It is found in the midbody. The protein localises to the midbody ring. Component of the exocyst complex involved in the docking of exocytic vesicles with fusion sites on the plasma membrane. In adipocytes, plays a crucial role in targeting SLC2A4 vesicle to the plasma membrane in response to insulin, perhaps directing the vesicle to the precise site of fusion. It is required for neuron survival and plays an essential role in cortical development. This chain is Exocyst complex component 7 (Exoc7), found in Rattus norvegicus (Rat).